An 88-amino-acid chain; its full sequence is Small ribosomal subunit protein bS18B (88 aa).

It belongs to the bacterial ribosomal protein bS18 family. Part of the 30S ribosomal subunit. Forms a tight heterodimer with protein bS6.

Binds as a heterodimer with protein bS6 to the central domain of the 16S rRNA, where it helps stabilize the platform of the 30S subunit. The polypeptide is Small ribosomal subunit protein bS18B (Mycolicibacterium paratuberculosis (strain ATCC BAA-968 / K-10) (Mycobacterium paratuberculosis)).